Reading from the N-terminus, the 58-residue chain is Light-harvesting protein B-870 alpha chain (58 aa).

Topologically, residues 1–15 (MSKFYKIWLVFDPRR) are cytoplasmic. A helical transmembrane segment spans residues 16-36 (VFVAQGVFLFLLAVLIHLILL). His32 contacts a bacteriochlorophyll. Residues 37-58 (STPAFNWLTVATAKHGYVAAAQ) are Periplasmic-facing.

This sequence belongs to the antenna complex alpha subunit family. As to quaternary structure, the core complex is formed by different alpha and beta chains, binding bacteriochlorophyll molecules, and arranged most probably in tetrameric structures disposed around the reaction center. The non-pigmented gamma chains may constitute additional components.

The protein resides in the cell inner membrane. Its function is as follows. Antenna complexes are light-harvesting systems, which transfer the excitation energy to the reaction centers. The sequence is that of Light-harvesting protein B-870 alpha chain (pufA) from Rhodobacter capsulatus (Rhodopseudomonas capsulata).